Reading from the N-terminus, the 401-residue chain is Chromatin modification-related protein EAF3 (401 aa).

The Tudor-knot domain maps to 13-98; that stretch reads RCLAFHGPLM…DEWVGYDRIR (86 aa). The span at 39 to 53 shows a compositional bias: polar residues; the sequence is TSIPNDKPGGSSQAT. Disordered stretches follow at residues 39-65 and 117-210; these read TSIPNDKPGGSSQATKEIKPQKLGEDE and EAKK…NMLH. Basic and acidic residues-rich tracts occupy residues 54–63 and 117–126; these read KEIKPQKLGE and EAKKSLLEQQ. Residues 153-190 are compositionally biased toward low complexity; it reads SISKSTSQSFLTSSVSGRKSGRSSANSLHPGSSLRSSS. S201 is modified (phosphoserine). The MRG domain maps to 216–399; that stretch reads PTPKISLQIP…TSSQYEGVAL (184 aa).

It belongs to the MRG family. As to quaternary structure, component of the NuA4 histone acetyltransferase complex composed of at least ACT1, ARP4, YAF9, VID21, SWC4, EAF3, EAF5, EAF6, EAF7, EPL1, ESA1, TRA1 and YNG2.

It localises to the nucleus. Component of the NuA4 histone acetyltransferase complex which is involved in transcriptional activation of selected genes principally by acetylation of nucleosomal histone H4 and H2A. The NuA4 complex is also involved in DNA repair. This chain is Chromatin modification-related protein EAF3 (EAF3), found in Saccharomyces cerevisiae (strain ATCC 204508 / S288c) (Baker's yeast).